The primary structure comprises 117 residues: Eukaryotic translation initiation factor 4E-binding protein 1 (117 aa).

Composition is skewed to polar residues over residues 1–12 (MSAGSSCSQTPS) and 33–47 (YSTT…TTPG). Residues 1 to 47 (MSAGSSCSQTPSRAIPTRRVALGDGVQLPPGDYSTTPGGTLFSTTPG) form a disordered region. Position 2 is an N-acetylserine (Ser-2). Thr-36 and Thr-40 each carry phosphothreonine. Ser-43 is modified (phosphoserine). Thr-45 bears the Phosphothreonine; by MTOR mark. Position 49 is a phosphothreonine (Thr-49). Tyr-53 carries the phosphotyrosine modification. Residues 53–59 (YDRKFLM) carry the YXXXXLphi motif motif. Lys-56 is covalently cross-linked (Glycyl lysine isopeptide (Lys-Gly) (interchain with G-Cter in ubiquitin)). Ser-64 is modified (phosphoserine; by DYRK2, MAPK1, MAPK3 and MTOR). A disordered region spans residues 64–117 (SPVAKTPPKDLPTIPGVTSPTSDEPPMQASQSHLHSSPEDKRAGGEESQFEMDI). The residue at position 69 (Thr-69) is a Phosphothreonine; by MTOR. Position 76 is a phosphothreonine (Thr-76). Residues 79–98 (GVTSPTSDEPPMQASQSHLH) show a composition bias toward polar residues. Phosphoserine is present on residues Ser-82, Ser-95, and Ser-99. Residues 99 to 108 (SSPEDKRAGG) are compositionally biased toward basic and acidic residues. The residue at position 100 (Ser-100) is a Phosphoserine; by DYRK2. Position 111 is a phosphoserine (Ser-111). Residues 113–117 (FEMDI) carry the TOS motif motif.

The protein belongs to the eIF4E-binding protein family. In terms of assembly, hypophosphorylated EIF4EBP1 competes with EIF4G1/EIF4G3 to interact with EIF4E; insulin stimulated MAP-kinase (MAPK1 and MAPK3) or mTORC1 phosphorylation of EIF4EBP1 causes dissociation of the complex allowing EIF4G1/EIF4G3 to bind and consequent initiation of translation. Interacts (via TOS motif) with RPTOR; promoting phosphorylation by mTORC1. Post-translationally, phosphorylated on serine and threonine residues in response to insulin, EGF and PDGF. Phosphorylation at Thr-36, Thr-45, Ser-64 and Thr-69, corresponding to the hyperphosphorylated form, is regulated by mTORC1 and abolishes binding to EIF4E. Ubiquitinated: when eIF4E levels are low, hypophosphorylated form is ubiquitinated by the BCR(KLHL25) complex, leading to its degradation and serving as a homeostatic mechanism to maintain translation and prevent eIF4E inhibition when eIF4E levels are low. Not ubiquitinated when hyperphosphorylated (at Thr-36, Thr-45, Ser-64 and Thr-69) or associated with eIF4E. In terms of tissue distribution, expressed in all tissues examined; highest levels in fat and skeletal tissue, lowest levels in kidney.

The protein resides in the cytoplasm. Its subcellular location is the nucleus. Functionally, repressor of translation initiation that regulates EIF4E activity by preventing its assembly into the eIF4F complex: hypophosphorylated form competes with EIF4G1/EIF4G3 and strongly binds to EIF4E, leading to repress translation. In contrast, hyperphosphorylated form dissociates from EIF4E, allowing interaction between EIF4G1/EIF4G3 and EIF4E, leading to initiation of translation. Mediates the regulation of protein translation by hormones, growth factors and other stimuli that signal through the MAP kinase and mTORC1 pathways. The chain is Eukaryotic translation initiation factor 4E-binding protein 1 (Eif4ebp1) from Rattus norvegicus (Rat).